We begin with the raw amino-acid sequence, 359 residues long: Proton-coupled zinc antiporter SLC30A2 (359 aa).

Over 1–56 (MASRSFFGALWKSEASRIPPVNLPSVELAVQSNHYCHAQKDSGSHPNSEKQRARRK) the chain is Cytoplasmic. A Mitochondrial localization signal motif is present at residues 34–37 (HYCH). Position 36 (Cys36) interacts with Zn(2+). A helical transmembrane segment spans residues 57–77 (LYVASAICLVFMIGEIIGGYL). Residues 78–86 (AQSLAIMTD) are Lumenal-facing. Residues 87–107 (AAHLLTDFASMLISLFSLWVS) form a helical membrane-spanning segment. His89 and Asp93 together coordinate Zn(2+). Over 108–123 (SRPATKTMNFGWQRAE) the chain is Cytoplasmic. A helical transmembrane segment spans residues 124-144 (ILGALLSVLSIWVVTGVLVYL). Residues 145–159 (AVQRLISGDYEIKGD) lie on the Lumenal side of the membrane. The chain crosses the membrane as a helical span at residues 160-180 (TMLITSGCAVAVNIIMGLALH). Over 181-207 (QSGHGHSHGHSHEDSSQQQQNPSVRAA) the chain is Cytoplasmic. A helical membrane pass occupies residues 208-228 (FIHVVGDLLQSVGVLVAAYII). Residues His210 and Asp214 each contribute to the Zn(2+) site. At 229-236 (YFKPEYKY) the chain is on the lumenal side. Residues 237 to 257 (VDPICTFLFSILVLGTTLTIL) traverse the membrane as a helical segment. Topologically, residues 258 to 291 (RDVILVLMEGTPKGVDFTTVKNLLLSVDGVEALH) are cytoplasmic. The Lysosomal targeting motif signature appears at 281–282 (LL). Ser283 bears the Phosphoserine mark. Zn(2+)-binding residues include His291, His308, and Glu342. The chain crosses the membrane as a helical span at residues 292-312 (SLHIWALTVAQPVLSVHIAIA). At 313–359 (QNVDAQAVLKVARDRLQGKFNFHTMTIQIESYSEDMKSCQECQGPSE) the chain is on the lumenal side.

Belongs to the cation diffusion facilitator (CDF) transporter (TC 2.A.4) family. SLC30A subfamily. Homodimer. Interacts (via lysosomal targeting motif) with AP3D1; in AP-3-mediated transport to lysosomes. Interacts with TMEM163. In terms of processing, phosphorylated at Ser-283. Phosphorylation at Ser-283 prevents localization to lysosomes. Dephosphorylation of Ser-283 which triggers localization to lysosomes, accumulation of zinc into lysosomes and lysosomal-mediated cell death is induced by TNF-alpha. As to expression, detected in intestine, kidney, seminal vesicles and testis.

The protein resides in the cytoplasmic vesicle. It is found in the secretory vesicle membrane. It localises to the zymogen granule membrane. The protein localises to the endosome membrane. Its subcellular location is the lysosome membrane. The protein resides in the mitochondrion inner membrane. The enzyme catalyses Zn(2+)(in) + 2 H(+)(out) = Zn(2+)(out) + 2 H(+)(in). Electroneutral proton-coupled antiporter concentrating zinc ions into a variety of intracellular organelles including endosomes, zymogen granules and mitochondria. Thereby, plays a crucial role in cellular zinc homeostasis to confer upon cells protection against its potential cytotoxicity. Regulates the zinc concentration of milk, through the transport of zinc ions into secretory vesicles of mammary cells. By concentrating zinc ions into lysosomes participates to lysosomal-mediated cell death during early mammary gland involution. In Rattus norvegicus (Rat), this protein is Proton-coupled zinc antiporter SLC30A2.